We begin with the raw amino-acid sequence, 322 residues long: Methionyl-tRNA formyltransferase (322 aa).

113–116 contacts (6S)-5,6,7,8-tetrahydrofolate; it reads SLLP.

Belongs to the Fmt family.

It catalyses the reaction L-methionyl-tRNA(fMet) + (6R)-10-formyltetrahydrofolate = N-formyl-L-methionyl-tRNA(fMet) + (6S)-5,6,7,8-tetrahydrofolate + H(+). In terms of biological role, attaches a formyl group to the free amino group of methionyl-tRNA(fMet). The formyl group appears to play a dual role in the initiator identity of N-formylmethionyl-tRNA by promoting its recognition by IF2 and preventing the misappropriation of this tRNA by the elongation apparatus. The sequence is that of Methionyl-tRNA formyltransferase from Bacteroides thetaiotaomicron (strain ATCC 29148 / DSM 2079 / JCM 5827 / CCUG 10774 / NCTC 10582 / VPI-5482 / E50).